A 479-amino-acid polypeptide reads, in one-letter code: Chromosomal replication initiator protein DnaA (479 aa).

The domain I, interacts with DnaA modulators stretch occupies residues 1-74; the sequence is MFSGVVMAWQ…RSLTGVDSSI (74 aa). A domain II region spans residues 74–142; the sequence is ITDVRFLEKK…SVPKNNASIR (69 aa). Positions 143-360 are domain III, AAA+ region; that stretch reads ALHPRYTFDE…SAITAIGARA (218 aa). The ATP site is built by Gly187, Gly189, Lys190, and Ser191. The domain IV, binds dsDNA stretch occupies residues 361 to 479; that stretch reads RLMGGYIDMN…NLLSDKVKQI (119 aa).

Belongs to the DnaA family. As to quaternary structure, oligomerizes as a right-handed, spiral filament on DNA at oriC.

Its subcellular location is the cytoplasm. Its function is as follows. Plays an essential role in the initiation and regulation of chromosomal replication. ATP-DnaA binds to the origin of replication (oriC) to initiate formation of the DNA replication initiation complex once per cell cycle. Binds the DnaA box (a 9 base pair repeat at the origin) and separates the double-stranded (ds)DNA. Forms a right-handed helical filament on oriC DNA; dsDNA binds to the exterior of the filament while single-stranded (ss)DNA is stabiized in the filament's interior. The ATP-DnaA-oriC complex binds and stabilizes one strand of the AT-rich DNA unwinding element (DUE), permitting loading of DNA polymerase. After initiation quickly degrades to an ADP-DnaA complex that is not apt for DNA replication. Binds acidic phospholipids. The polypeptide is Chromosomal replication initiator protein DnaA (Desulfotalea psychrophila (strain LSv54 / DSM 12343)).